The chain runs to 162 residues: Phosphopantetheine adenylyltransferase (162 aa).

Serine 9 lines the substrate pocket. ATP is bound by residues 9–10 (SF) and histidine 17. Positions 41, 73, and 87 each coordinate substrate. Residues 88-90 (GLR), glutamate 98, and 123-129 (YSFISSS) contribute to the ATP site.

Belongs to the bacterial CoaD family. In terms of assembly, homohexamer. Requires Mg(2+) as cofactor.

Its subcellular location is the cytoplasm. The enzyme catalyses (R)-4'-phosphopantetheine + ATP + H(+) = 3'-dephospho-CoA + diphosphate. It functions in the pathway cofactor biosynthesis; coenzyme A biosynthesis; CoA from (R)-pantothenate: step 4/5. Reversibly transfers an adenylyl group from ATP to 4'-phosphopantetheine, yielding dephospho-CoA (dPCoA) and pyrophosphate. The protein is Phosphopantetheine adenylyltransferase of Carboxydothermus hydrogenoformans (strain ATCC BAA-161 / DSM 6008 / Z-2901).